A 333-amino-acid polypeptide reads, in one-letter code: Biotin synthase (333 aa).

Residues 51 to 281 (HFGNQVSLCG…DVHITICGGR (231 aa)) form the Radical SAM core domain. C69, C73, and C76 together coordinate [4Fe-4S] cluster. [2Fe-2S] cluster is bound at residue C206.

This sequence belongs to the radical SAM superfamily. Biotin synthase family. In terms of assembly, homodimer. [4Fe-4S] cluster serves as cofactor. It depends on [2Fe-2S] cluster as a cofactor.

The enzyme catalyses (4R,5S)-dethiobiotin + (sulfur carrier)-SH + 2 reduced [2Fe-2S]-[ferredoxin] + 2 S-adenosyl-L-methionine = (sulfur carrier)-H + biotin + 2 5'-deoxyadenosine + 2 L-methionine + 2 oxidized [2Fe-2S]-[ferredoxin]. Its pathway is cofactor biosynthesis; biotin biosynthesis; biotin from 7,8-diaminononanoate: step 2/2. Functionally, catalyzes the conversion of dethiobiotin (DTB) to biotin by the insertion of a sulfur atom into dethiobiotin via a radical-based mechanism. In Trichlorobacter lovleyi (strain ATCC BAA-1151 / DSM 17278 / SZ) (Geobacter lovleyi), this protein is Biotin synthase.